The sequence spans 142 residues: Large-conductance mechanosensitive channel (142 aa).

The next 3 membrane-spanning stretches (helical) occupy residues 15 to 35 (AFVMRGNVVDLAVGVIIGAAF), 38 to 58 (IVTSLVNDIFMPIIGMIIGNI), and 82 to 102 (GMFIQEIVNFLIIALCVFVAI).

It belongs to the MscL family. Homopentamer.

It is found in the cell inner membrane. Channel that opens in response to stretch forces in the membrane lipid bilayer. May participate in the regulation of osmotic pressure changes within the cell. This chain is Large-conductance mechanosensitive channel, found in Fusobacterium nucleatum subsp. nucleatum (strain ATCC 25586 / DSM 15643 / BCRC 10681 / CIP 101130 / JCM 8532 / KCTC 2640 / LMG 13131 / VPI 4355).